Reading from the N-terminus, the 571-residue chain is Phosphoenolpyruvate-protein phosphotransferase (571 aa).

His203 serves as the catalytic Tele-phosphohistidine intermediate. The phosphoenolpyruvate site is built by Arg306 and Arg342. Positions 429 and 453 each coordinate Mg(2+). Phosphoenolpyruvate is bound by residues 452 to 453 and Arg463; that span reads ND. Cys500 serves as the catalytic Proton donor.

The protein belongs to the PEP-utilizing enzyme family. In terms of assembly, homodimer. Requires Mg(2+) as cofactor.

Its subcellular location is the cytoplasm. It catalyses the reaction L-histidyl-[protein] + phosphoenolpyruvate = N(pros)-phospho-L-histidyl-[protein] + pyruvate. Functionally, general (non sugar-specific) component of the phosphoenolpyruvate-dependent sugar phosphotransferase system (sugar PTS). This major carbohydrate active-transport system catalyzes the phosphorylation of incoming sugar substrates concomitantly with their translocation across the cell membrane. Enzyme I transfers the phosphoryl group from phosphoenolpyruvate (PEP) to the phosphoryl carrier protein (HPr). This chain is Phosphoenolpyruvate-protein phosphotransferase (ptsI), found in Chlamydia pneumoniae (Chlamydophila pneumoniae).